A 292-amino-acid chain; its full sequence is Bifunctional protein FolD 1 (292 aa).

165 to 167 (GRS) is a binding site for NADP(+).

The protein belongs to the tetrahydrofolate dehydrogenase/cyclohydrolase family. As to quaternary structure, homodimer.

It carries out the reaction (6R)-5,10-methylene-5,6,7,8-tetrahydrofolate + NADP(+) = (6R)-5,10-methenyltetrahydrofolate + NADPH. The enzyme catalyses (6R)-5,10-methenyltetrahydrofolate + H2O = (6R)-10-formyltetrahydrofolate + H(+). Its pathway is one-carbon metabolism; tetrahydrofolate interconversion. In terms of biological role, catalyzes the oxidation of 5,10-methylenetetrahydrofolate to 5,10-methenyltetrahydrofolate and then the hydrolysis of 5,10-methenyltetrahydrofolate to 10-formyltetrahydrofolate. The protein is Bifunctional protein FolD 1 of Myxococcus xanthus (strain DK1622).